The sequence spans 872 residues: Alanine--tRNA ligase (872 aa).

Residues His567, His571, Cys669, and His673 each contribute to the Zn(2+) site.

It belongs to the class-II aminoacyl-tRNA synthetase family. Requires Zn(2+) as cofactor.

The protein resides in the cytoplasm. The enzyme catalyses tRNA(Ala) + L-alanine + ATP = L-alanyl-tRNA(Ala) + AMP + diphosphate. In terms of biological role, catalyzes the attachment of alanine to tRNA(Ala) in a two-step reaction: alanine is first activated by ATP to form Ala-AMP and then transferred to the acceptor end of tRNA(Ala). Also edits incorrectly charged Ser-tRNA(Ala) and Gly-tRNA(Ala) via its editing domain. The chain is Alanine--tRNA ligase from Streptococcus pyogenes serotype M4 (strain MGAS10750).